Consider the following 539-residue polypeptide: Peptide chain release factor 3 (539 aa).

The tr-type G domain maps to 14-283 (EKRRNFAIIS…AFLEYALQPE (270 aa)). Residues 23–30 (SHPDAGKT), 91–95 (DTPGH), and 145–148 (NKLD) each bind GTP.

The protein belongs to the TRAFAC class translation factor GTPase superfamily. Classic translation factor GTPase family. PrfC subfamily.

The protein localises to the cytoplasm. Its function is as follows. Increases the formation of ribosomal termination complexes and stimulates activities of RF-1 and RF-2. It binds guanine nucleotides and has strong preference for UGA stop codons. It may interact directly with the ribosome. The stimulation of RF-1 and RF-2 is significantly reduced by GTP and GDP, but not by GMP. The protein is Peptide chain release factor 3 of Rippkaea orientalis (strain PCC 8801 / RF-1) (Cyanothece sp. (strain PCC 8801)).